We begin with the raw amino-acid sequence, 232 residues long: Ovalbumin-related protein X (232 aa).

This sequence belongs to the serpin family. Ov-serpin subfamily. In terms of tissue distribution, expressed in egg white (at protein level).

The chain is Ovalbumin-related protein X (SERPINB14C) from Gallus gallus (Chicken).